The following is a 455-amino-acid chain: O-acyltransferase pigD (455 aa).

This sequence belongs to the trichothecene 3-O-acetyltransferase family.

The protein operates within secondary metabolite biosynthesis. Functionally, O-acetyltransferase; part of the gene cluster that mediates the biosynthesis of azaphilone pigments (MonAzPs), a complex mixture of compounds with a common azaphilone skeleton very widely used as food colorants. Within the pathway, pigD directly transfers the fatty acyl chain from the beta-ketoacyl-ACP produced by the pigJ-pigK fatty acid synthase (FAS) to the C-4 alcohol. The first step of the pathway is performed by the nrPKS pigA that forms the hexaketide precursor from successive condensations of five malonyl-CoA units, with a simple acetyl-CoA starter unit. The role of esterase pigG is not clear, but it may play at most a supplementary role in the formation of the benzaldehyde produced by the pigA nrPKS. This very reactive benzaldehyde is intercepted by the pigC ketoreductase that to provide the first stable enzyme-free MonAzPs intermediate, 6-(4-hydroxy-2-oxopentyl)-3-methyl-2,4-dioxocyclohexane carbaldehyde, also known as M7PKS-1. The FAD-dependent monooxygenase pigN hydroxylates M7PKS-1 at C-4, which triggers the formation of the pyran ring. PigJ, pigK and pigD are involved in the acetylation of the pyran ring. PigJ and pigK form the two subunits of a dedicated fungal FAS that produces the side chain fatty acyl moiety of MonAzPs and pigD transfers the fatty acyl chain to the C-4 alcohol. PigM and pigO are involved in the elimination of the omega-1 alcohol. PigM acts as an O-acetyltransferase that synthesizes the putative O-11 acetyl intermediate whereas pigO eliminates acetic acid to yield an intermediate with a C10(11) double bond. The dehydration of the C-11 alcohol followed by the reduction of the C6(7) double bond by the NAD(P)H-dependent oxidoreductase pigE increases the electrophilicity of the C-5 ketone of the resulting acyl benzopyran. This in turn sets up the C-5 ketone for an intramolecular Knoevenagel aldol condensation with the C-20 enol of the side chain. This condensation affords the characteristic linear tricyclic carbon skeletons of the yellow pigments that serve as the common precursors for the classical yellow pigments monascin and ankaflavin, orange pigments rubopunctatin and monascorubrin, and red pigments ribropunctamine and monascorubramine. The FAD-dependent oxidoreductase pigF is especially invoved in the biosynthesis of orange and red pigments via desaturation of C6(7). The sequence is that of O-acyltransferase pigD from Monascus ruber (Mold).